Here is a 116-residue protein sequence, read N- to C-terminus: M-zodatoxin-Lt6a/b (116 aa).

A signal peptide spans 1-22 (MKYFVVALTLAVAFVCIEECKT). 2 consecutive propeptides follow at residues 23 to 44 (VEIG…EEAR) and 80 to 83 (EEAR). 2 consecutive short sequence motifs (processing quadruplet motif) follow at residues 41-44 (EEAR) and 80-83 (EEAR). A Pyrrolidone carboxylic acid modification is found at Gln-84.

This sequence belongs to the cationic peptide 03 (latarcin) family. 06 subfamily. In terms of processing, cleavage of the propeptide depends on the processing quadruplet motif (XXXR, with at least one of X being E). Expressed by the venom gland.

Its subcellular location is the secreted. Does not have antimicrobial activity against neither Gram-positive bacteria (A.globiformis VKM Ac-1112 (MIC&gt;70 uM), and B.subtilis VKM B-501 (MIC&gt;70 uM)), nor Gram-negative bacteria (E.coli DH5-alpha (MIC&gt;70 uM), E.coli MH1 (MIC&gt;70 uM), and P.aeruginosa PAO1 (MIC&gt;70 uM)), nor yeasts (P.pastoris GS115 (MIC&gt;70 uM), and S.cerevisiae Y190 (MIC&gt;70 uM)). Does not have hemolytic activity against rabbit erythrocytes. However, it causes some conductance changes in planar bilayer membranes, without membrane rupture, suggesting a cytolytic function on other biological targets. It causes paralysis, but is not lethal when injected into insect (M.domestica) larvae. This Lachesana tarabaevi (Spider) protein is M-zodatoxin-Lt6a/b.